The sequence spans 779 residues: Membrane metallo-endopeptidase-like 1 (779 aa).

Topologically, residues 1–27 (MGKSEGPVGMVESAGRAGQKRPGFLEG) are cytoplasmic. A helical; Signal-anchor for type II membrane protein transmembrane segment spans residues 28–48 (GLLLLLLLVTAALVALGVLYA). Over 49 to 779 (DRRGKQLPRL…MHPKERCRVW (731 aa)) the chain is Lumenal. A Peptidase M13 domain is found at 88-779 (VCTTPGCVIA…MHPKERCRVW (692 aa)). 5 disulfide bridges follow: cysteine 89/cysteine 94, cysteine 112/cysteine 764, cysteine 120/cysteine 724, cysteine 175/cysteine 439, and cysteine 650/cysteine 776. Arginine 135 serves as a coordination point for a peptide. 4 N-linked (GlcNAc...) asparagine glycosylation sites follow: asparagine 177, asparagine 207, asparagine 350, and asparagine 530. The stretch at 515–560 (LEEMNRRLDEEYSNLNFSEDLYFENSLQNLKVGAQRSLRKLREKVD) forms a coiled coil. Histidine 613 provides a ligand contact to Zn(2+). The active site involves glutamate 614. Residue histidine 617 coordinates Zn(2+). Asparagine 657 carries N-linked (GlcNAc...) asparagine glycosylation. Glutamate 676 is a Zn(2+) binding site. The Proton donor role is filled by aspartate 680.

Belongs to the peptidase M13 family. Requires Zn(2+) as cofactor. In terms of processing, N-glycosylated. In terms of tissue distribution, predominantly expressed in testis. Weakly expressed in brain, kidney and heart.

It is found in the membrane. The protein localises to the secreted. It catalyses the reaction Preferential cleavage of polypeptides between hydrophobic residues, particularly with Phe or Tyr at P1'.. With respect to regulation, inhibited by thiorphan and phosphoramidon. Its function is as follows. Metalloprotease involved in sperm function, possibly by modulating the processes of fertilization and early embryonic development. Degrades a broad variety of small peptides with a preference for peptides shorter than 3 kDa containing neutral bulky aliphatic or aromatic amino acid residues. Shares the same substrate specificity with MME and cleaves peptides at the same amide bond. The sequence is that of Membrane metallo-endopeptidase-like 1 (MMEL1) from Homo sapiens (Human).